The chain runs to 157 residues: Short-type peptidyl-prolyl cis-trans isomerase (157 aa).

The region spanning 1-95 is the PPIase FKBP-type domain; it reads MINLIKKGDY…RDERLIQEIP (95 aa). The segment at 86–137 is IF; that stretch reads RDERLIQEIPKEMFADADFEPQEGMLILASGIPAKIIKVTDDTVTLDFNHEL.

The protein belongs to the FKBP-type PPIase family.

The protein localises to the cytoplasm. The catalysed reaction is [protein]-peptidylproline (omega=180) = [protein]-peptidylproline (omega=0). Functionally, catalyzes the cis-trans isomerization of peptidyl prolyl bonds and accelerates protein folding. Also exhibits chaperone-like activity. This chain is Short-type peptidyl-prolyl cis-trans isomerase, found in Methanocaldococcus jannaschii (strain ATCC 43067 / DSM 2661 / JAL-1 / JCM 10045 / NBRC 100440) (Methanococcus jannaschii).